The primary structure comprises 459 residues: Zinc finger and BTB domain-containing protein 9 (459 aa).

Residues 48-112 enclose the BTB domain; the sequence is CDVSLLVQGR…IYSGSLHLPL (65 aa). Residues 178–189 show a composition bias toward polar residues; sequence VRSSASTENSVL. Disordered stretches follow at residues 178 to 200 and 212 to 274; these read VRSS…EGSE and EEEE…ASQI. Residues Lys285, Lys293, and Lys368 each participate in a glycyl lysine isopeptide (Lys-Gly) (interchain with G-Cter in SUMO2) cross-link. A disordered region spans residues 293–356; sequence KEKTKVLSGE…GGTGQAMHGP (64 aa). The C2H2-type 1 zinc finger occupies 397–419; sequence FGCGICNKRFKLKHHLTEHMKTH. A C2H2-type 2; atypical zinc finger spans residues 424–446; the sequence is HACPHCGRRFRVQAFFLRHRDLC.

It localises to the nucleus. Functionally, may be involved in transcriptional regulation. The polypeptide is Zinc finger and BTB domain-containing protein 9 (Zbtb9) (Mus musculus (Mouse)).